We begin with the raw amino-acid sequence, 102 residues long: Beta-defensin 116 (102 aa).

The signal sequence occupies residues 1–23 (MSVMKPCLMTIAILMILAQKTPG). 3 disulfides stabilise this stretch: Cys40–Cys67, Cys47–Cys61, and Cys51–Cys68. A disordered region spans residues 83–102 (EDYDSNSNLSVTNSSSYSHI). Positions 87-102 (SNSNLSVTNSSSYSHI) are enriched in low complexity.

This sequence belongs to the beta-defensin family.

It is found in the secreted. Has antibacterial activity. The chain is Beta-defensin 116 (DEFB116) from Homo sapiens (Human).